Consider the following 558-residue polypeptide: Phosphatidylserine lipase ABHD16A (558 aa).

2 helical membrane passes run Ile60–Phe80 and Val93–Leu113. Topologically, residues Arg114–Leu558 are cytoplasmic. Residues Leu281 to Leu407 enclose the AB hydrolase-1 domain. Catalysis depends on charge relay system residues Ser355, Asp430, and His507.

Belongs to the AB hydrolase superfamily. ABHD16 family.

It localises to the membrane. It catalyses the reaction 1-heptadecanoyl-2-(5Z,8Z,11Z,14Z-eicosatetraenoyl)-sn-glycero-3-phosphoserine + H2O = 1-heptadecanoyl-sn-glycero-3-phosphoserine + (5Z,8Z,11Z,14Z)-eicosatetraenoate + H(+). It carries out the reaction 1-hexadecanoyl-2-(9Z-octadecenoyl)-sn-glycero-3-phospho-L-serine + H2O = 1-hexadecanoyl-sn-glycero-3-phospho-L-serine + (9Z)-octadecenoate + H(+). The enzyme catalyses 1-octadecanoyl-2-(9Z,12Z-octadecadienoyl)-sn-glycero-3-phosphoserine + H2O = 1-octadecanoyl-sn-glycero-3-phosphoserine + (9Z,12Z)-octadecadienoate + H(+). The catalysed reaction is 1-heptadecanoyl-2-(5Z,8Z,11Z,14Z-eicosatetraenoyl)-sn-glycero-3-phosphocholine + H2O = 1-heptadecanoyl-sn-glycero-3-phosphocholine + (5Z,8Z,11Z,14Z)-eicosatetraenoate + H(+). It catalyses the reaction 1-hexadecanoyl-2-(9Z-octadecenoyl)-sn-glycero-3-phosphoglycerol + H2O = 1-hexadecanoyl-sn-glycero-3-phosphoglycerol + (9Z)-octadecenoate + H(+). It carries out the reaction 1-hexadecanoyl-2-(9Z-octadecenoyl)-sn-glycero-3-phospho-(1D-myo-inositol) + H2O = 1-hexadecanoyl-sn-glycero-3-phospho-(1D-myo-inositol) + (9Z)-octadecenoate + H(+). The enzyme catalyses 1-heptadecanoyl-2-(5Z,8Z,11Z,14Z-eicosatetraenoyl)-sn-glycero-3-phosphoethanolamine + H2O = 1-heptadecanoyl-sn-glycero-3-phosphoethanolamine + (5Z,8Z,11Z,14Z)-eicosatetraenoate + H(+). The catalysed reaction is 1-hexadecanoyl-2-(9Z-octadecenoyl)-sn-glycero-3-phospho-(1'-sn-glycerol) + H2O = 1-hexadecanoyl-sn-glycero-3-phospho-(1'-sn-glycerol) + (9Z)-octadecenoate + H(+). It catalyses the reaction Hydrolyzes glycerol monoesters of long-chain fatty acids.. It carries out the reaction 1-tetradecanoylglycerol + H2O = tetradecanoate + glycerol + H(+). The enzyme catalyses 2-hexadecanoylglycerol + H2O = glycerol + hexadecanoate + H(+). The catalysed reaction is 1-(9Z-octadecenoyl)-glycerol + H2O = glycerol + (9Z)-octadecenoate + H(+). It catalyses the reaction 2-(9Z-octadecenoyl)-glycerol + H2O = glycerol + (9Z)-octadecenoate + H(+). It carries out the reaction 2-(9Z,12Z-octadecadienoyl)-glycerol + H2O = (9Z,12Z)-octadecadienoate + glycerol + H(+). The enzyme catalyses 1-(5Z,8Z,11Z,14Z-eicosatetraenoyl)-glycerol + H2O = glycerol + (5Z,8Z,11Z,14Z)-eicosatetraenoate + H(+). The catalysed reaction is 2-(5Z,8Z,11Z,14Z-eicosatetraenoyl)-glycerol + H2O = glycerol + (5Z,8Z,11Z,14Z)-eicosatetraenoate + H(+). It catalyses the reaction prostaglandin D2-1-glycerol ester + H2O = prostaglandin D2 + glycerol + H(+). It carries out the reaction 2-glyceryl-15-deoxy-Delta(12,14)-prostaglandin J2 + H2O = 15-deoxy-Delta(12,14)-prostaglandin J2 + glycerol + H(+). The enzyme catalyses 1-(9Z,12Z-octadecadienoyl)-glycerol + H2O = (9Z,12Z)-octadecadienoate + glycerol + H(+). Its activity is regulated as follows. Inhibited by beta-lactone-based lipid inhibitors, such as beta-lactone palmostatin-B. Its function is as follows. Phosphatidylserine (PS) lipase that mediates the hydrolysis of phosphatidylserine to generate lysophosphatidylserine (LPS). LPS constitutes a class of signaling lipids that regulates immunological and neurological processes. Has no activity towards diacylglycerol, triacylglycerol or lysophosphatidylserine lipase. Also has monoacylglycerol lipase activity, with preference for 1-(9Z,12Z-octadecadienoyl)-glycerol (1-LG) and 2-glyceryl-15-deoxy-Delta(12,14)-prostaglandin J2 (15d-PGJ(2)-G). This Homo sapiens (Human) protein is Phosphatidylserine lipase ABHD16A.